We begin with the raw amino-acid sequence, 20 residues long: Cytochrome c oxidase subunit 7B-heart, mitochondrial (20 aa).

This sequence belongs to the cytochrome c oxidase VIIb family. Component of the cytochrome c oxidase (complex IV, CIV), a multisubunit enzyme composed of 14 subunits. The complex is composed of a catalytic core of 3 subunits MT-CO1, MT-CO2 and MT-CO3, encoded in the mitochondrial DNA, and 11 supernumerary subunits COX4I, COX5A, COX5B, COX6A, COX6B, COX6C, COX7A, COX7B, COX7C, COX8 and NDUFA4, which are encoded in the nuclear genome. The complex exists as a monomer or a dimer and forms supercomplexes (SCs) in the inner mitochondrial membrane with NADH-ubiquinone oxidoreductase (complex I, CI) and ubiquinol-cytochrome c oxidoreductase (cytochrome b-c1 complex, complex III, CIII), resulting in different assemblies (supercomplex SCI(1)III(2)IV(1) and megacomplex MCI(2)III(2)IV(2)).

It is found in the mitochondrion inner membrane. The catalysed reaction is 4 Fe(II)-[cytochrome c] + O2 + 8 H(+)(in) = 4 Fe(III)-[cytochrome c] + 2 H2O + 4 H(+)(out). It functions in the pathway energy metabolism; oxidative phosphorylation. Its function is as follows. Component of the cytochrome c oxidase, the last enzyme in the mitochondrial electron transport chain which drives oxidative phosphorylation. The respiratory chain contains 3 multisubunit complexes succinate dehydrogenase (complex II, CII), ubiquinol-cytochrome c oxidoreductase (cytochrome b-c1 complex, complex III, CIII) and cytochrome c oxidase (complex IV, CIV), that cooperate to transfer electrons derived from NADH and succinate to molecular oxygen, creating an electrochemical gradient over the inner membrane that drives transmembrane transport and the ATP synthase. Cytochrome c oxidase is the component of the respiratory chain that catalyzes the reduction of oxygen to water. Electrons originating from reduced cytochrome c in the intermembrane space (IMS) are transferred via the dinuclear copper A center (CU(A)) of subunit 2 and heme A of subunit 1 to the active site in subunit 1, a binuclear center (BNC) formed by heme A3 and copper B (CU(B)). The BNC reduces molecular oxygen to 2 water molecules using 4 electrons from cytochrome c in the IMS and 4 protons from the mitochondrial matrix. The polypeptide is Cytochrome c oxidase subunit 7B-heart, mitochondrial (Thunnus obesus (Bigeye tuna)).